Here is a 75-residue protein sequence, read N- to C-terminus: Large ribosomal subunit protein bL31 (75 aa).

This sequence belongs to the bacterial ribosomal protein bL31 family. Type A subfamily. Part of the 50S ribosomal subunit.

Its function is as follows. Binds the 23S rRNA. The polypeptide is Large ribosomal subunit protein bL31 (Chlorobium luteolum (strain DSM 273 / BCRC 81028 / 2530) (Pelodictyon luteolum)).